Consider the following 1399-residue polypeptide: Alpha-glucan water dikinase 1, chloroplastic (1399 aa).

The N-terminal 75 residues, 1–75 (MSNSVVHNLL…GRPLSFVPRA (75 aa)), are a transit peptide targeting the chloroplast. N-acetylvaline is present on Val-76. Positions 265–306 (LLKKDNSNESPKSNGTSSSGREEKKKVSKQPERKKNYNTDKI) are disordered. Polar residues predominate over residues 272 to 283 (NESPKSNGTSSS). Over residues 284-306 (GREEKKKVSKQPERKKNYNTDKI) the composition is skewed to basic and acidic residues. Catalysis depends on His-1004, which acts as the Tele-phosphohistidine intermediate.

It belongs to the PEP-utilizing enzyme family. As to quaternary structure, homodimer. Requires Mg(2+) as cofactor.

It localises to the plastid. The protein resides in the chloroplast. It catalyses the reaction [(1-&gt;4)-alpha-D-glucosyl](n) + n ATP + n H2O = [(1-&gt;4)-6-phospho-alpha-D-glucosyl](n) + n AMP + n phosphate + 2n H(+). Its function is as follows. Mediates the incorporation of phosphate into starch-like alpha-glucan, mostly at the C-6 position of glucose units. Acts as an overall regulator of starch mobilization. Required for starch degradation, suggesting that the phosphate content of starch regulates its degradability. This is Alpha-glucan water dikinase 1, chloroplastic from Arabidopsis thaliana (Mouse-ear cress).